Here is a 579-residue protein sequence, read N- to C-terminus: F-box protein At5g39450 (579 aa).

Residues 16–62 form the F-box domain; it reads TCLLLSLPEDVIAVIARFVSPRDICNLSLCCKSLCDVVDSERIWLVQ.

This is F-box protein At5g39450 from Arabidopsis thaliana (Mouse-ear cress).